The primary structure comprises 942 residues: Exopolysaccharide phosphotransferase SCO2592 (942 aa).

Belongs to the stealth family.

The chain is Exopolysaccharide phosphotransferase SCO2592 from Streptomyces coelicolor (strain ATCC BAA-471 / A3(2) / M145).